Reading from the N-terminus, the 119-residue chain is Large ribosomal subunit protein uL18 (119 aa).

The tract at residues 1-26 (MGQNDKAARRQKIKLRSKTRGQGTAA) is disordered. Residues 9-19 (RRQKIKLRSKT) are compositionally biased toward basic residues.

This sequence belongs to the universal ribosomal protein uL18 family. As to quaternary structure, part of the 50S ribosomal subunit; part of the 5S rRNA/L5/L18/L25 subcomplex. Contacts the 5S and 23S rRNAs.

Its function is as follows. This is one of the proteins that bind and probably mediate the attachment of the 5S RNA into the large ribosomal subunit, where it forms part of the central protuberance. The chain is Large ribosomal subunit protein uL18 from Prosthecochloris aestuarii (strain DSM 271 / SK 413).